Consider the following 109-residue polypeptide: Nucleoid-associated protein PC1_1077 (109 aa).

The protein belongs to the YbaB/EbfC family. As to quaternary structure, homodimer.

It is found in the cytoplasm. The protein resides in the nucleoid. Functionally, binds to DNA and alters its conformation. May be involved in regulation of gene expression, nucleoid organization and DNA protection. This Pectobacterium carotovorum subsp. carotovorum (strain PC1) protein is Nucleoid-associated protein PC1_1077.